A 242-amino-acid chain; its full sequence is DNA repair protein RecO (242 aa).

Belongs to the RecO family.

Involved in DNA repair and RecF pathway recombination. This Paracoccus denitrificans (strain Pd 1222) protein is DNA repair protein RecO.